A 1034-amino-acid chain; its full sequence is Probable outer membrane protein PmpF (1034 aa).

The N-terminal stretch at 1 to 25 is a signal peptide; the sequence is MIKRTSLSFACLSFFYLSTISILQA. Low complexity-rich tracts occupy residues 664-673 and 680-709; these read SAPTSATSIA and ETFT…ASNS. Residues 664–709 form a disordered region; it reads SAPTSATSIAEQKKTSETFTPSNTTTASIPNIKASAGSGSGSASNS. Residues 755 to 1034 enclose the Autotransporter domain; it reads RSLLPDNSWF…YINAGGALVF (280 aa).

It belongs to the PMP outer membrane protein family.

The protein localises to the secreted. It localises to the cell wall. Its subcellular location is the cell outer membrane. In Chlamydia trachomatis serovar D (strain ATCC VR-885 / DSM 19411 / UW-3/Cx), this protein is Probable outer membrane protein PmpF (pmpF).